A 207-amino-acid polypeptide reads, in one-letter code: Ras-related protein Rab-7a (207 aa).

N-acetylthreonine is present on Thr2. GTP contacts are provided by Ser17, Gly18, Val19, Gly20, Lys21, Thr22, Ser23, Ser34, Asn35, Tyr37, and Thr40. A Mg(2+)-binding site is contributed by Thr22. The Switch 1 signature appears at Tyr28–Ile41. The Mg(2+) site is built by Thr40 and Asp63. Residue Gly66 coordinates GTP. Positions Gln67–Asp82 match the Switch 2 motif. Ser72 carries the phosphoserine modification. GTP is bound by residues Asn125, Lys126, Asp128, Ala156, and Lys157. Glycyl lysine isopeptide (Lys-Gly) (interchain with G-Cter in ubiquitin) cross-links involve residues Lys191 and Lys194. 2 S-geranylgeranyl cysteine lipidation sites follow: Cys205 and Cys207. Cys207 is subject to Cysteine methyl ester.

Belongs to the small GTPase superfamily. Rab family. In terms of assembly, interacts with NTRK1/TRKA. Interacts with RILP. Interacts with PSMA7. Interacts with RNF115. Interacts with and FYCO1. Interacts with the PIK3C3/VPS34-PIK3R4 complex. The GTP-bound form interacts with OSBPL1A. The GTP-bound form interacts with RAC1. Interacts with CLN3. Interacts with CHM, the substrate-binding subunit of the Rab geranylgeranyltransferase complex. Interacts with C9orf72. Does not interact with HPS4 and the BLOC-3 complex (heterodimer of HPS1 and HPS4). Interacts with CLN5. Interacts with PLEKHM1 (via N- and C-terminus). Interacts with PRPH; the interaction is direct. Interacts with VPS13A. The GDP-bound form interacts with RIMOC1. Interacts with the MON1A-CCZ1B complex and this interaction is enhanced in the presence of RIMOC1. Interacts with VPS39 and VPS41. Forms a ternary complex with LAMP2 and RUFY4; the interaction with LAMP2 is mediated by RUFY4 (via RUN and coiled coil domains). The cofactor is Mg(2+). In terms of processing, deubiquitination at Lys-191 and Lys-194 by USP32. Post-translationally, phosphorylated at Ser-72 by LRRK1; phosphorylation is dependent on protein kinase C (PKC) activation of LRRK1. Prenylated. Prenylation is required for association with cellular membranes. Expressed in osteoclasts and in neurons.

The protein localises to the cytoplasmic vesicle. It localises to the phagosome membrane. The protein resides in the late endosome membrane. Its subcellular location is the lysosome membrane. It is found in the melanosome membrane. The protein localises to the autophagosome membrane. It localises to the lipid droplet. The protein resides in the endosome membrane. Its subcellular location is the mitochondrion membrane. It catalyses the reaction GTP + H2O = GDP + phosphate + H(+). Its activity is regulated as follows. Regulated by guanine nucleotide exchange factors (GEFs) which promote the exchange of bound GDP for free GTP. Regulated by GTPase activating proteins (GAPs) which increase the GTP hydrolysis activity. Inhibited by GDP dissociation inhibitors (GDIs). Its function is as follows. The small GTPases Rab are key regulators of intracellular membrane trafficking, from the formation of transport vesicles to their fusion with membranes. Rabs cycle between an inactive GDP-bound form and an active GTP-bound form that is able to recruit to membranes different sets of downstream effectors directly responsible for vesicle formation, movement, tethering and fusion. In its active state, RAB7A binds to a variety of effector proteins playing a key role in the regulation of endo-lysosomal trafficking. Governs early-to-late endosomal maturation, microtubule minus-end as well as plus-end directed endosomal migration and positioning, and endosome-lysosome transport through different protein-protein interaction cascades. Also plays a central role in growth-factor-mediated cell signaling, nutrient-transporter-mediated nutrient uptake, neurotrophin transport in the axons of neurons and lipid metabolism. Also involved in regulation of some specialized endosomal membrane trafficking, such as maturation of melanosomes, pathogen-induced phagosomes (or vacuoles) and autophagosomes. Plays a role in the maturation and acidification of phagosomes that engulf pathogens, such as S.aureus and Mycobacteria. Plays a role in the fusion of phagosomes with lysosomes. In concert with RAC1, plays a role in regulating the formation of RBs (ruffled borders) in osteoclasts. Controls the endosomal trafficking and neurite outgrowth signaling of NTRK1/TRKA. Regulates the endocytic trafficking of the EGF-EGFR complex by regulating its lysosomal degradation. Involved in the ADRB2-stimulated lipolysis through lipophagy, a cytosolic lipase-independent autophagic pathway. Required for the exosomal release of SDCBP, CD63 and syndecan. Required for vesicular trafficking and cell surface expression of ACE2. May play a role in PRPH neuronal intermediate filament assembly. This is Ras-related protein Rab-7a from Rattus norvegicus (Rat).